Consider the following 283-residue polypeptide: Shikimate dehydrogenase (NADP(+)) (283 aa).

Residues 22-24 (SRS) and threonine 69 each bind shikimate. Lysine 73 serves as the catalytic Proton acceptor. 2 residues coordinate shikimate: asparagine 93 and aspartate 108. NADP(+)-binding positions include 133–137 (GAGGS) and leucine 222. Tyrosine 224 serves as a coordination point for shikimate. An NADP(+)-binding site is contributed by glycine 245.

The protein belongs to the shikimate dehydrogenase family. Homodimer.

The catalysed reaction is shikimate + NADP(+) = 3-dehydroshikimate + NADPH + H(+). It functions in the pathway metabolic intermediate biosynthesis; chorismate biosynthesis; chorismate from D-erythrose 4-phosphate and phosphoenolpyruvate: step 4/7. Involved in the biosynthesis of the chorismate, which leads to the biosynthesis of aromatic amino acids. Catalyzes the reversible NADPH linked reduction of 3-dehydroshikimate (DHSA) to yield shikimate (SA). This is Shikimate dehydrogenase (NADP(+)) from Rhodopseudomonas palustris (strain BisB5).